A 183-amino-acid chain; its full sequence is tRNA-splicing endonuclease (183 aa).

Active-site residues include Y120, H128, and K159.

Belongs to the tRNA-intron endonuclease family. Archaeal short subfamily. Homotetramer; although the tetramer contains four active sites, only two participate in the cleavage. Therefore, it should be considered as a dimer of dimers.

It carries out the reaction pretRNA = a 3'-half-tRNA molecule with a 5'-OH end + a 5'-half-tRNA molecule with a 2',3'-cyclic phosphate end + an intron with a 2',3'-cyclic phosphate and a 5'-hydroxyl terminus.. Functionally, endonuclease that removes tRNA introns. Cleaves pre-tRNA at the 5'- and 3'-splice sites to release the intron. The products are an intron and two tRNA half-molecules bearing 2',3' cyclic phosphate and 5'-OH termini. Recognizes a pseudosymmetric substrate in which 2 bulged loops of 3 bases are separated by a stem of 4 bp. In Pyrobaculum arsenaticum (strain DSM 13514 / JCM 11321 / PZ6), this protein is tRNA-splicing endonuclease.